The chain runs to 49 residues: Disintegrin ocellatin (49 aa).

One can recognise a Disintegrin domain in the interval 1-47 (DCESGPCCDNCKFLKEGTICKMARGDNMHHYCNGKTCDCPRNPYKGE). Cystine bridges form between Cys2-Cys11, Cys7-Cys32, Cys8-Cys37, and Cys20-Cys39. The Cell attachment site motif lies at 24-26 (RGD).

The protein belongs to the venom metalloproteinase (M12B) family. P-II subfamily. P-IIa sub-subfamily. As to quaternary structure, monomer. Expressed by the venom gland.

Its subcellular location is the secreted. Inhibits ADP-induced human platelet aggregation. The sequence is that of Disintegrin ocellatin from Echis ocellatus (Ocellated saw-scaled viper).